Consider the following 202-residue polypeptide: Protein DCV1 (202 aa).

Residues 1-18 (MLNYKLILLFSSFLQLIS) form the signal peptide. 3 consecutive transmembrane segments (helical) span residues 91–107 (IGGL…LTFI), 137–155 (ILTL…LLCM), and 168–189 (LVWL…FLSF).

It localises to the membrane. This is Protein DCV1 (DCV1) from Saccharomyces cerevisiae (strain ATCC 204508 / S288c) (Baker's yeast).